The following is a 188-amino-acid chain: Pyridoxal 5'-phosphate synthase subunit PdxT (188 aa).

46–48 (GES) contributes to the L-glutamine binding site. Catalysis depends on C78, which acts as the Nucleophile. Residues R105 and 134–135 (IR) contribute to the L-glutamine site. Active-site charge relay system residues include H170 and E172.

Belongs to the glutaminase PdxT/SNO family. In the presence of PdxS, forms a dodecamer of heterodimers. Only shows activity in the heterodimer.

It catalyses the reaction aldehydo-D-ribose 5-phosphate + D-glyceraldehyde 3-phosphate + L-glutamine = pyridoxal 5'-phosphate + L-glutamate + phosphate + 3 H2O + H(+). It carries out the reaction L-glutamine + H2O = L-glutamate + NH4(+). The protein operates within cofactor biosynthesis; pyridoxal 5'-phosphate biosynthesis. Functionally, catalyzes the hydrolysis of glutamine to glutamate and ammonia as part of the biosynthesis of pyridoxal 5'-phosphate. The resulting ammonia molecule is channeled to the active site of PdxS. In Moorella thermoacetica (strain ATCC 39073 / JCM 9320), this protein is Pyridoxal 5'-phosphate synthase subunit PdxT.